A 384-amino-acid polypeptide reads, in one-letter code: Terpene cyclase ascI (384 aa).

The signal sequence occupies residues 1 to 25 (MPQLAGKLILAGLIPLGAWVLHGFA). The helical transmembrane segment at 82 to 102 (LSLHAFMFAGQGVPLLVLNML) threads the bilayer. Asparagine 109 is a glycosylation site (N-linked (GlcNAc...) asparagine). The next 4 helical transmembrane spans lie at 119 to 139 (VFGI…YLFL), 164 to 184 (AVGF…SLPH), 194 to 214 (VLSV…AYFA), and 235 to 255 (GAVY…TFAI). Residue asparagine 258 is glycosylated (N-linked (GlcNAc...) asparagine). The next 2 helical transmembrane spans lie at 291-311 (WFLQ…AIGI) and 330-350 (IALR…ALSL). Asparagine 372 carries N-linked (GlcNAc...) asparagine glycosylation.

Belongs to the membrane-bound ascI terpene cyclase family.

The protein localises to the membrane. It catalyses the reaction 16-hydroxy-ilicicolin A epoxide = ascofuranol. Its pathway is secondary metabolite biosynthesis; terpenoid biosynthesis. Functionally, epoxide hydrolase; part of the asc-2 gene cluster that mediates the biosynthesis of ascofuranone, a strong inhibitor of cyanide-insensitive alternative oxidases and a promising drug candidate against African trypanosomiasis. The first step in the pathway is performed by the non-reducing polyketide synthase ascC that produces orsellinic acid by condensing acetyl-CoA with 3 malonyl-CoA units. Orsellinic acid is then prenylated by the prenyltransferase ascA to yield ilicicolinic acid B. Ilicicolinic acid B is further reduced to ilicicolin B by the reductase ascB. The halogenase ascD then chlorinates ilicicolin B to produce ilicicolin A which is converted to ilicicolin A epoxide by the cytochrome P450 monooxygenase ascE that catalyzes stereoselective epoxidation of the terminal double bond of the prenyl group. Ilicicolin A epoxide is the last common precursor for the biosynthesis of ascofuranone and ascochlorin. The terpene cyclase ascF produces a monocyclic terpene, and the cyclization reaction is proposed to be initiated by protonation of the terminal epoxide of ilicicolin A epoxide to generate a monocyclic tertiarycation, which is followed by a series of hydride and methyl shifts with abstraction of proton, leading to the formation of the (14S,15R,19R)-trimethylcyclohexanone ring structure of ilicicolin C, which is finally reduced to ascochlorin by the dehydrogenase ascG. On the other hand, ilicicolin A epoxide is hydroxylated by the cytochrome P450 monooxygenase ascH, and the resultant product is cyclized by the terpene cyclase ascI to ascofuranol via protonation-initiated epoxide ring opening, which facilitates the 6-endo-tet cyclization to form the tetrahy-drofuran ring. Finally, ascofuranol is oxidized into ascofuranone by ascJ. This Acremonium egyptiacum (Oospora egyptiaca) protein is Terpene cyclase ascI.